Here is a 697-residue protein sequence, read N- to C-terminus: MLKRAHYVALHVTLNHNGLSYQRVFSCLTQFPMLRHSSTAAKNNVSMISKFQAPEDKFFPSFSLKSMPKQSSHMSASLLNSLNTSMKKSFSRKKYREAVSLFRKNLWKYEESWIRNQDFIDCCIIACSAYEKLCQPLRIKKTFIILSQLCPKLPAELCRVFLSYATGCVNYGHNVALTCFENSPKELIDYNYWLSWLSFSKSSPVVLWLTFTRISSAGLSPNAETFEILLVAFASQKNFWFFEKTYDLFMQSKLTWRPFTYRVLIESFMKFGNFEEAEKLAYSYVKNKIDSLSSDVFFSAILKFYAVGGDFQGFKKLLSFMTDYNVNFSVSTLNQLLRLNLYHAMDEKISTFSSEHITKLIEQQIKPDLESMLIISEYLNEYKPSPKMRELINWLYSNFHLPKTVSLHFLREVQSLVFRYPLLHSKIHLAISTLKDSGCDWNVGLSYLNWLFVNKRITEAINFFYTITINAGTRPPNELFDVFISNLLKFTSAETTSSAIRKVQSKYPSMCGSSPAIKLILFSKSFSVLQSTSEKIEQLLVSFQRNPSAYSKSFTLALAEWLFSRRLFQSALLYSFKVSDVDDSHFSFRSQILICWCYYRLNDFKSLIQHTNNLLQSNNASLLRRLAATLYRIQIRENNGYKRVLLDRLRKKAILRAFPSRTLNRTEKVKLYNEDAKFRSIFSRVLLHQSHLGNVIS.

The N-terminal 36 residues, 1–36, are a transit peptide targeting the mitochondrion; it reads MLKRAHYVALHVTLNHNGLSYQRVFSCLTQFPMLRH. PPR repeat units follow at residues 257–288 and 294–328; these read RPFTYRVLIESFMKFGNFEEAEKLAYSYVKNK and SDVFFSAILKFYAVGGDFQGFKKLLSFMTDYNVNF.

Its subcellular location is the mitochondrion. Functionally, mitochondrial RNA-binding protein required for the stability of the cox2 and cox3 mRNAs. The sequence is that of Pentatricopeptide repeat-containing protein 1, mitochondrial (ppr1) from Schizosaccharomyces pombe (strain 972 / ATCC 24843) (Fission yeast).